A 277-amino-acid polypeptide reads, in one-letter code: Large ribosomal subunit protein uL2 (277 aa).

A disordered region spans residues 218 to 277; the sequence is PTVRGSVMNPNDHPHGGGEGKAPVGRKAPSTPWGKPALGLKTRNKKAKSDKLIVRRRNEK. Positions 264 to 277 are enriched in basic and acidic residues; sequence AKSDKLIVRRRNEK.

Belongs to the universal ribosomal protein uL2 family. As to quaternary structure, part of the 50S ribosomal subunit. Forms a bridge to the 30S subunit in the 70S ribosome.

One of the primary rRNA binding proteins. Required for association of the 30S and 50S subunits to form the 70S ribosome, for tRNA binding and peptide bond formation. It has been suggested to have peptidyltransferase activity; this is somewhat controversial. Makes several contacts with the 16S rRNA in the 70S ribosome. This chain is Large ribosomal subunit protein uL2, found in Streptococcus pyogenes serotype M4 (strain MGAS10750).